Here is a 355-residue protein sequence, read N- to C-terminus: NADH dehydrogenase [ubiquinone] 1 alpha subcomplex subunit 10, mitochondrial (355 aa).

The transit peptide at 1–35 (MALRLLKLGATSASARVVAAGAQRVRGIHSSGQCK) directs the protein to the mitochondrion. Ser-250 bears the Phosphoserine; by PINK1 mark. The residue at position 285 (Lys-285) is an N6-succinyllysine.

This sequence belongs to the complex I NDUFA10 subunit family. Complex I is composed of 45 different subunits. This a component of the hydrophobic protein fraction. The cofactor is FAD. In terms of processing, phosphorylation at Ser-250 by PINK1 is required for the binding and/or reduction of the complex I substrate ubiquinone.

It is found in the mitochondrion matrix. Its function is as follows. Accessory subunit of the mitochondrial membrane respiratory chain NADH dehydrogenase (Complex I), that is believed not to be involved in catalysis. Complex I functions in the transfer of electrons from NADH to the respiratory chain. The immediate electron acceptor for the enzyme is believed to be ubiquinone. The chain is NADH dehydrogenase [ubiquinone] 1 alpha subcomplex subunit 10, mitochondrial (NDUFA10) from Gorilla gorilla gorilla (Western lowland gorilla).